The chain runs to 89 residues: Small ribosomal subunit protein bS20 (89 aa).

The protein belongs to the bacterial ribosomal protein bS20 family.

In terms of biological role, binds directly to 16S ribosomal RNA. This chain is Small ribosomal subunit protein bS20, found in Wolbachia sp. subsp. Brugia malayi (strain TRS).